The primary structure comprises 852 residues: Gamma-tubulin complex component 2 homolog (852 aa).

The residue at position 73 (serine 73) is a Phosphoserine.

This sequence belongs to the TUBGCP family. As to quaternary structure, gamma-tubulin small complex (Gamma TuSC) is a heterotetrameric complex which contains two molecules of gamma-tubulin, and one molecule each of Dgrip84 and Dgrip91. The gamma-tubulin in this complex binds preferentially to GDP over GTP.

Its subcellular location is the cytoplasm. It is found in the cytoskeleton. The protein resides in the microtubule organizing center. The protein localises to the centrosome. It localises to the perinuclear region. In Drosophila melanogaster (Fruit fly), this protein is Gamma-tubulin complex component 2 homolog (Grip84).